We begin with the raw amino-acid sequence, 156 residues long: 6,7-dimethyl-8-ribityllumazine synthase (156 aa).

Residues W33, 64–66, and 86–88 contribute to the 5-amino-6-(D-ribitylamino)uracil site; these read SVE and VIL. A (2S)-2-hydroxy-3-oxobutyl phosphate-binding site is contributed by 91 to 92; the sequence is ET. H94 acts as the Proton donor in catalysis. Residue I119 participates in 5-amino-6-(D-ribitylamino)uracil binding. Residue R133 coordinates (2S)-2-hydroxy-3-oxobutyl phosphate.

This sequence belongs to the DMRL synthase family.

It carries out the reaction (2S)-2-hydroxy-3-oxobutyl phosphate + 5-amino-6-(D-ribitylamino)uracil = 6,7-dimethyl-8-(1-D-ribityl)lumazine + phosphate + 2 H2O + H(+). The protein operates within cofactor biosynthesis; riboflavin biosynthesis; riboflavin from 2-hydroxy-3-oxobutyl phosphate and 5-amino-6-(D-ribitylamino)uracil: step 1/2. Its function is as follows. Catalyzes the formation of 6,7-dimethyl-8-ribityllumazine by condensation of 5-amino-6-(D-ribitylamino)uracil with 3,4-dihydroxy-2-butanone 4-phosphate. This is the penultimate step in the biosynthesis of riboflavin. The protein is 6,7-dimethyl-8-ribityllumazine synthase of Tropheryma whipplei (strain TW08/27) (Whipple's bacillus).